A 584-amino-acid chain; its full sequence is Kinesin-like protein KIN-10C (584 aa).

The Kinesin motor domain maps to 11 to 324; that stretch reads PVRVVLRVRP…VSLAARSRHV (314 aa). Position 99-106 (99-106) interacts with ATP; it reads GATGSGKT. 2 disordered regions span residues 377–398 and 445–469; these read SMSH…AMDQ and DKTG…KQRT.

The protein belongs to the TRAFAC class myosin-kinesin ATPase superfamily. Kinesin family. KIN-10 subfamily.

This chain is Kinesin-like protein KIN-10C, found in Oryza sativa subsp. japonica (Rice).